A 5104-amino-acid chain; its full sequence is Malformin synthetase mlfA (5104 aa).

Residues 225–616 (ERHAVNRPHS…CGRADTQVKL (392 aa)) are adenylation 1. One can recognise a Carrier 1 domain in the interval 757–830 (SRLEQEIQLA…EAASLAEVQE (74 aa)). An O-(pantetheine 4'-phosphoryl)serine modification is found at Ser791. Residues 868 to 1299 (EDVFPCTTMQ…ALNTLSLLQA (432 aa)) form a condensation 1 region. An adenylation 2 region spans residues 1327–1716 (DRWVTRQPEG…GRKDTQVKLR (390 aa)). One can recognise a Carrier 2 domain in the interval 1854–1931 (TPASELERTL…QLAAEFGGPA (78 aa)). Position 1891 is an O-(pantetheine 4'-phosphoryl)serine (Ser1891). Disordered stretches follow at residues 1928–1961 (GGPA…DGVD) and 1998–2025 (TNKT…KVDS). Composition is skewed to low complexity over residues 1934 to 1958 (SASS…STND) and 2003 to 2013 (SVSSSSSSSSS). Residues 2066 to 2481 (EDIYPATPLQ…TVSYSDKEAL (416 aa)) are condensation 2. Residues 2504–2896 (VRTPHAPAVC…IGRRDGQLKL (393 aa)) are adenylation 3. In terms of domain architecture, Carrier 3 spans 3032–3108 (RPVTSQEREM…QLICHLNTIR (77 aa)). Ser3069 bears the O-(pantetheine 4'-phosphoryl)serine mark. 2 condensation regions span residues 3125–3590 (WVAL…TYDQ) and 3611–4029 (NIYP…EQLV). The tract at residues 4054-4444 (HSSREAVCAW…VGRKDNQIKF (391 aa)) is adenylation 4. In terms of domain architecture, Carrier 4 spans 4578–4654 (MPSTAAERKM…DLSDQARSLI (77 aa)). Ser4615 bears the O-(pantetheine 4'-phosphoryl)serine mark. Positions 4691-5018 (DVLPTTSFQR…LQTIVQHQNN (328 aa)) are condensation 5.

Belongs to the NRP synthetase family.

Its pathway is secondary metabolite biosynthesis. In terms of biological role, nonribosomal peptide synthetase; part of the gene cluster that mediates the biosynthesis of malformins, cyclic pentapeptides with a disulfide bond between 2 consecutive cysteins, that show potential anti-tumor as well as antimalarial and antitrypanosomal properties. The nonribosomal peptide synthetase mlfA is responsible of the formation of the cyclic pentapeptide. The malformin biosynthesis clusters in malformin-producing fungi also contain enzymes involved in the formation of the disulfide bond between the two consecutive cysteins within malformins, in addition to additional tailoring enzymes such as methyltransferases or oxidoreductases. They are also composed of up to 4 major facilitator superfamily transporters, and transcription factors probably involved in the regulation of the expression of those clusters. The chain is Malformin synthetase mlfA from Aspergillus vadensis (strain CBS 113365 / IMI 142717 / IBT 24658).